The sequence spans 762 residues: 5-methyltetrahydropteroyltriglutamate--homocysteine methyltransferase (762 aa).

5-methyltetrahydropteroyltri-L-glutamate contacts are provided by residues 16-19 (RELK) and K117. L-homocysteine contacts are provided by residues 438-440 (IGS) and E491. L-methionine-binding positions include 438 to 440 (IGS) and E491. 5-methyltetrahydropteroyltri-L-glutamate contacts are provided by residues 522–523 (RC) and W568. D606 contributes to the L-homocysteine binding site. D606 contacts L-methionine. E612 provides a ligand contact to 5-methyltetrahydropteroyltri-L-glutamate. H648, C650, and E672 together coordinate Zn(2+). The Proton donor role is filled by H701. A Zn(2+)-binding site is contributed by C733.

It belongs to the vitamin-B12 independent methionine synthase family. Zn(2+) is required as a cofactor.

It carries out the reaction 5-methyltetrahydropteroyltri-L-glutamate + L-homocysteine = tetrahydropteroyltri-L-glutamate + L-methionine. Its pathway is amino-acid biosynthesis; L-methionine biosynthesis via de novo pathway; L-methionine from L-homocysteine (MetE route): step 1/1. Its function is as follows. Catalyzes the transfer of a methyl group from 5-methyltetrahydrofolate to homocysteine resulting in methionine formation. The protein is 5-methyltetrahydropteroyltriglutamate--homocysteine methyltransferase of Pseudomonas fluorescens (strain ATCC BAA-477 / NRRL B-23932 / Pf-5).